The following is a 158-amino-acid chain: Ribosome maturation factor RimP (158 aa).

This sequence belongs to the RimP family.

It localises to the cytoplasm. In terms of biological role, required for maturation of 30S ribosomal subunits. The polypeptide is Ribosome maturation factor RimP (Leuconostoc citreum (strain KM20)).